Consider the following 342-residue polypeptide: Flap endonuclease 1 (342 aa).

The tract at residues 1–99 is N-domain; sequence MGVKIGELIE…RAIEERVRAR (99 aa). Positions 28, 81, 153, 155, 174, 176, and 237 each coordinate Mg(2+). Residues 117–259 are I-domain; sequence EARKYAQAAL…RALELVKKYK (143 aa).

This sequence belongs to the XPG/RAD2 endonuclease family. FEN1 subfamily. As to quaternary structure, interacts with PCNA. PCNA stimulates the nuclease activity without altering cleavage specificity. The cofactor is Mg(2+).

Its function is as follows. Structure-specific nuclease with 5'-flap endonuclease and 5'-3' exonuclease activities involved in DNA replication and repair. During DNA replication, cleaves the 5'-overhanging flap structure that is generated by displacement synthesis when DNA polymerase encounters the 5'-end of a downstream Okazaki fragment. Binds the unpaired 3'-DNA end and kinks the DNA to facilitate 5' cleavage specificity. Cleaves one nucleotide into the double-stranded DNA from the junction in flap DNA, leaving a nick for ligation. Also involved in the base excision repair (BER) pathway. Acts as a genome stabilization factor that prevents flaps from equilibrating into structures that lead to duplications and deletions. Also possesses 5'-3' exonuclease activity on nicked or gapped double-stranded DNA. In Korarchaeum cryptofilum (strain OPF8), this protein is Flap endonuclease 1.